We begin with the raw amino-acid sequence, 151 residues long: Small ribosomal subunit protein uS19 (151 aa).

The interval 1–23 is disordered; it reads MVVNKQGSVKSIKRKARKSRKVT. Over residues 11 to 23 the composition is skewed to basic residues; it reads SIKRKARKSRKVT.

The protein belongs to the universal ribosomal protein uS19 family.

Its function is as follows. Protein S19 forms a complex with S13 that binds strongly to the 16S ribosomal RNA. In Thermoplasma volcanium (strain ATCC 51530 / DSM 4299 / JCM 9571 / NBRC 15438 / GSS1), this protein is Small ribosomal subunit protein uS19 (rps19).